The chain runs to 1102 residues: DNA-directed RNA polymerase subunit beta (1102 aa).

The tract at residues 1076–1102 (IDSQRRAPNRPTYESLHTEEDLEEEEV) is disordered.

This sequence belongs to the RNA polymerase beta chain family. As to quaternary structure, in cyanobacteria the RNAP catalytic core is composed of 2 alpha, 1 beta, 1 beta', 1 gamma and 1 omega subunit. When a sigma factor is associated with the core the holoenzyme is formed, which can initiate transcription.

It carries out the reaction RNA(n) + a ribonucleoside 5'-triphosphate = RNA(n+1) + diphosphate. In terms of biological role, DNA-dependent RNA polymerase catalyzes the transcription of DNA into RNA using the four ribonucleoside triphosphates as substrates. In Synechocystis sp. (strain ATCC 27184 / PCC 6803 / Kazusa), this protein is DNA-directed RNA polymerase subunit beta.